The following is a 132-amino-acid chain: Translation initiation factor 5A (132 aa).

At K36 the chain carries Hypusine.

Belongs to the eIF-5A family.

The protein localises to the cytoplasm. Its function is as follows. Functions by promoting the formation of the first peptide bond. In Desulfurococcus amylolyticus (strain DSM 18924 / JCM 16383 / VKM B-2413 / 1221n) (Desulfurococcus kamchatkensis), this protein is Translation initiation factor 5A (eIF5A).